Here is a 436-residue protein sequence, read N- to C-terminus: Methanethiol oxidase (436 aa).

An N-terminal signal peptide occupies residues 1 to 24 (MKRREFGALAAGALAMGLPFRAFA).

This sequence belongs to the selenium-binding protein family.

The protein resides in the periplasm. It carries out the reaction methanethiol + O2 + H2O = hydrogen sulfide + formaldehyde + H2O2 + H(+). It functions in the pathway organosulfur degradation. In terms of biological role, catalyzes the oxidation of methanethiol. This chain is Methanethiol oxidase, found in Ruegeria pomeroyi (strain ATCC 700808 / DSM 15171 / DSS-3) (Silicibacter pomeroyi).